The chain runs to 250 residues: Proteasome subunit alpha type-7 (250 aa).

Belongs to the peptidase T1A family. As to quaternary structure, the 26S proteasome consists of a 20S proteasome core and two 19S regulatory subunits. The 20S proteasome core is composed of 28 subunits that are arranged in four stacked rings, resulting in a barrel-shaped structure. The two end rings are each formed by seven alpha subunits, and the two central rings are each formed by seven beta subunits. The catalytic chamber with the active sites is on the inside of the barrel.

It is found in the cytoplasm. It localises to the nucleus. Functionally, the proteasome is a multicatalytic proteinase complex which is characterized by its ability to cleave peptides with Arg, Phe, Tyr, Leu, and Glu adjacent to the leaving group at neutral or slightly basic pH. The proteasome has an ATP-dependent proteolytic activity. This chain is Proteasome subunit alpha type-7 (psmA7), found in Dictyostelium discoideum (Social amoeba).